Consider the following 563-residue polypeptide: Adenine deaminase (563 aa).

It belongs to the metallo-dependent hydrolases superfamily. Adenine deaminase family. Mn(2+) is required as a cofactor.

The enzyme catalyses adenine + H2O + H(+) = hypoxanthine + NH4(+). This Brucella anthropi (strain ATCC 49188 / DSM 6882 / CCUG 24695 / JCM 21032 / LMG 3331 / NBRC 15819 / NCTC 12168 / Alc 37) (Ochrobactrum anthropi) protein is Adenine deaminase.